A 264-amino-acid chain; its full sequence is S-adenosylmethionine decarboxylase proenzyme (264 aa).

Catalysis depends on Ser112, which acts as the Schiff-base intermediate with substrate; via pyruvic acid. Residue Ser112 is modified to Pyruvic acid (Ser); by autocatalysis. Catalysis depends on His117, which acts as the Proton acceptor; for processing activity. Residue Cys140 is the Proton donor; for catalytic activity of the active site.

It belongs to the prokaryotic AdoMetDC family. Type 2 subfamily. In terms of assembly, heterooctamer of four alpha and four beta chains arranged as a tetramer of alpha/beta heterodimers. Pyruvate serves as cofactor. Post-translationally, is synthesized initially as an inactive proenzyme. Formation of the active enzyme involves a self-maturation process in which the active site pyruvoyl group is generated from an internal serine residue via an autocatalytic post-translational modification. Two non-identical subunits are generated from the proenzyme in this reaction, and the pyruvate is formed at the N-terminus of the alpha chain, which is derived from the carboxyl end of the proenzyme. The post-translation cleavage follows an unusual pathway, termed non-hydrolytic serinolysis, in which the side chain hydroxyl group of the serine supplies its oxygen atom to form the C-terminus of the beta chain, while the remainder of the serine residue undergoes an oxidative deamination to produce ammonia and the pyruvoyl group blocking the N-terminus of the alpha chain.

It carries out the reaction S-adenosyl-L-methionine + H(+) = S-adenosyl 3-(methylsulfanyl)propylamine + CO2. It participates in amine and polyamine biosynthesis; S-adenosylmethioninamine biosynthesis; S-adenosylmethioninamine from S-adenosyl-L-methionine: step 1/1. Catalyzes the decarboxylation of S-adenosylmethionine to S-adenosylmethioninamine (dcAdoMet), the propylamine donor required for the synthesis of the polyamines spermine and spermidine from the diamine putrescine. In Pectobacterium atrosepticum (strain SCRI 1043 / ATCC BAA-672) (Erwinia carotovora subsp. atroseptica), this protein is S-adenosylmethionine decarboxylase proenzyme.